The primary structure comprises 506 residues: Galactose/methyl galactoside import ATP-binding protein MglA (506 aa).

2 consecutive ABC transporter domains span residues 14 to 249 and 264 to 506; these read LTMT…VGRE and VILE…AKYL. 46–53 contributes to the ATP binding site; it reads GENGAGKS.

This sequence belongs to the ABC transporter superfamily. Galactose/methyl galactoside importer (TC 3.A.1.2.3) family. The complex is composed of one ATP-binding protein (MglA), two transmembrane proteins (MglC) and a solute-binding protein (MglB).

The protein localises to the cell inner membrane. The enzyme catalyses D-galactose(out) + ATP + H2O = D-galactose(in) + ADP + phosphate + H(+). It catalyses the reaction methyl beta-D-galactoside(out) + ATP + H2O = methyl beta-D-galactoside(in) + ADP + phosphate + H(+). In terms of biological role, part of the ABC transporter complex MglABC involved in galactose/methyl galactoside import. Responsible for energy coupling to the transport system. This chain is Galactose/methyl galactoside import ATP-binding protein MglA, found in Mannheimia succiniciproducens (strain KCTC 0769BP / MBEL55E).